Here is a 98-residue protein sequence, read N- to C-terminus: NADH-ubiquinone oxidoreductase chain 4L (98 aa).

The next 3 helical transmembrane spans lie at 1 to 21, 29 to 49, and 61 to 81; these read MTPTYMNIMLAFTISLLGMLT, SLLCLEGMMMSLFIMTTLIAL, and IILLVFAACEAAVGLALLVSI.

It belongs to the complex I subunit 4L family. As to quaternary structure, core subunit of respiratory chain NADH dehydrogenase (Complex I) which is composed of 45 different subunits.

The protein resides in the mitochondrion inner membrane. It carries out the reaction a ubiquinone + NADH + 5 H(+)(in) = a ubiquinol + NAD(+) + 4 H(+)(out). Functionally, core subunit of the mitochondrial membrane respiratory chain NADH dehydrogenase (Complex I) which catalyzes electron transfer from NADH through the respiratory chain, using ubiquinone as an electron acceptor. Part of the enzyme membrane arm which is embedded in the lipid bilayer and involved in proton translocation. This Macaca pagensis (Mentawai macaque) protein is NADH-ubiquinone oxidoreductase chain 4L (MT-ND4L).